The following is a 324-amino-acid chain: UDP-N-acetylenolpyruvoylglucosamine reductase (324 aa).

One can recognise an FAD-binding PCMH-type domain in the interval 36–217; the sequence is FRAGGLAELM…IRAEMDAVRA (182 aa). Arg183 is a catalytic residue. Ser232 functions as the Proton donor in the catalytic mechanism. Glu302 is an active-site residue.

Belongs to the MurB family. The cofactor is FAD.

It localises to the cytoplasm. The catalysed reaction is UDP-N-acetyl-alpha-D-muramate + NADP(+) = UDP-N-acetyl-3-O-(1-carboxyvinyl)-alpha-D-glucosamine + NADPH + H(+). It participates in cell wall biogenesis; peptidoglycan biosynthesis. Functionally, cell wall formation. The sequence is that of UDP-N-acetylenolpyruvoylglucosamine reductase from Rhizobium rhizogenes (strain K84 / ATCC BAA-868) (Agrobacterium radiobacter).